Reading from the N-terminus, the 256-residue chain is Nuclear shuttle protein (256 aa).

A Bipartite nuclear localization signal motif is present at residues 21–42 (HSTGKRSRNVSRIDFKRRSSKY). Residues 81–96 (SLGKTEPSRSRSYIKL) carry the Nuclear localization signal motif. The segment at 150–187 (ELFGARIHSHGNLAVSSALKDRFYIRHVFKRVISVEKD) is interaction with Arabidopsis thaliana NSI protein.

It belongs to the begomovirus nuclear shuttle protein family. Binds to single-stranded and double-stranded viral DNA. Interacts with the host nuclear shuttle interacting (NSI) protein. This interaction may allow NSP to recruit NSI monomers to the viral genome and thus regulate nuclear export of viral genome by NSP.

The protein localises to the host nucleus. It is found in the host cytoplasm. The protein resides in the host cell membrane. Binds to the genomic viral ssDNA, shuttles it into and out of the cell nucleus. Begomoviruses use 2 proteins to transport their DNA from cell to cell. The nuclear shuttle protein (NSP) shuttles it between nucleus and cytoplasm and the movement protein (MP) probably transports the DNA-NSP complex to the cell periphery and facilitates movement across the cell wall. The sequence is that of Nuclear shuttle protein from Solanum lycopersicum (Tomato).